A 262-amino-acid chain; its full sequence is ATP synthase subunit a 1 (262 aa).

Transmembrane regions (helical) follow at residues 30-50, 91-111, 131-151, 201-221, and 232-252; these read TVHI…ILVF, IAPL…MDLI, IVPT…FALM, LFGN…LMPW, and AIFH…LTIV.

Belongs to the ATPase A chain family. In terms of assembly, F-type ATPases have 2 components, CF(1) - the catalytic core - and CF(0) - the membrane proton channel. CF(1) has five subunits: alpha(3), beta(3), gamma(1), delta(1), epsilon(1). CF(0) has three main subunits: a(1), b(2) and c(9-12). The alpha and beta chains form an alternating ring which encloses part of the gamma chain. CF(1) is attached to CF(0) by a central stalk formed by the gamma and epsilon chains, while a peripheral stalk is formed by the delta and b chains.

The protein resides in the cell inner membrane. Key component of the proton channel; it plays a direct role in the translocation of protons across the membrane. This is ATP synthase subunit a 1 from Photobacterium profundum (strain SS9).